Consider the following 367-residue polypeptide: Putative methylthioribose-1-phosphate isomerase (367 aa).

Residues 65–67 (RGA), Arg106, and Gln218 contribute to the substrate site. Asp259 serves as the catalytic Proton donor. Position 269 to 270 (269 to 270 (NK)) interacts with substrate.

The protein belongs to the eIF-2B alpha/beta/delta subunits family. MtnA subfamily.

The catalysed reaction is 5-(methylsulfanyl)-alpha-D-ribose 1-phosphate = 5-(methylsulfanyl)-D-ribulose 1-phosphate. Catalyzes the interconversion of methylthioribose-1-phosphate (MTR-1-P) into methylthioribulose-1-phosphate (MTRu-1-P). This is Putative methylthioribose-1-phosphate isomerase from Sulfolobus acidocaldarius (strain ATCC 33909 / DSM 639 / JCM 8929 / NBRC 15157 / NCIMB 11770).